A 191-amino-acid chain; its full sequence is Xanthine phosphoribosyltransferase (191 aa).

Xanthine is bound by residues Leu20 and Asn27. 5-phospho-alpha-D-ribose 1-diphosphate is bound at residue Ala128–Ala132. Residue Lys156 participates in xanthine binding.

Belongs to the purine/pyrimidine phosphoribosyltransferase family. Xpt subfamily. Homodimer.

It is found in the cytoplasm. The enzyme catalyses XMP + diphosphate = xanthine + 5-phospho-alpha-D-ribose 1-diphosphate. The protein operates within purine metabolism; XMP biosynthesis via salvage pathway; XMP from xanthine: step 1/1. In terms of biological role, converts the preformed base xanthine, a product of nucleic acid breakdown, to xanthosine 5'-monophosphate (XMP), so it can be reused for RNA or DNA synthesis. The polypeptide is Xanthine phosphoribosyltransferase (Acinetobacter baumannii (strain AB307-0294)).